The following is a 106-amino-acid chain: Protein U4 (106 aa).

Residues 5–25 (FFISIILFVVLLNPSLIINMV) form a helical membrane-spanning segment.

Belongs to the nanovirus U4 protein family.

The protein resides in the membrane. The protein is Protein U4 (DNA-U4) of Cicer arietinum (Chickpea).